The sequence spans 162 residues: ATP synthase subunit delta, mitochondrial (162 aa).

A mitochondrion-targeting transit peptide spans 1-24 (MFSVARTAIRGAARPAVRIARRGY).

In terms of assembly, F-type ATP synthases have 2 components, the catalytic core F(1) and the membrane-embedded component F(0), linked together by a central stalk and a peripheral stalk. The central stalk, also called rotor shaft, is often seen as part of F(1). The peripheral stalk is seen as part of F(0). F(0) contains the membrane channel next to the rotor. F-type ATP synthases form dimers but each monomer functions independently in ATP generation. The dimer consists of 17 different polypeptides: ATP1 (subunit alpha, 3 molecules per monomer, part of F(1)), ATP2 (subunit beta, 3 copies per monomer, part of F(1)), ATP3 (subunit gamma, part of the central stalk), ATP4 (subunit b, part of the peripheral stalk), ATP5/OSCP (subunit 5/OSCP, part of the peripheral stalk), ATP6 (subunit a, part of the peripheral stalk), ATP7 (subunit d, part of the peripheral stalk), ATP8 (subunit 8, part of the peripheral stalk), OLI1 (subunit c, part of the rotor, 10 molecules per monomer), ATP14 (subunit h, part of the peripheral stalk), ATP15 (subunit epsilon, part of the central stalk), ATP16 (subunit delta, part of the central stalk), ATP17 (subunit f, part of the peripheral stalk), ATP18 (subunit i/j, part of the peripheral stalk), ATP19 (subunit k, dimer-specific, at interface between monomers), ATP20 (subunit g, at interface between monomers), TIM11 (subunit e, at interface between monomers).

The protein localises to the mitochondrion inner membrane. Its function is as follows. Mitochondrial membrane ATP synthase (F(1)F(0) ATP synthase or Complex V) produces ATP from ADP in the presence of a proton gradient across the membrane which is generated by electron transport complexes of the respiratory chain. F-type ATP synthases consist of two structural domains, F(1) - containing the extramembraneous catalytic core, and F(0) - containing the membrane proton channel, linked together by a central stalk and a peripheral stalk. During catalysis, ATP synthesis in the catalytic domain of F(1) is coupled via a rotary mechanism of the central stalk subunits to proton translocation. Part of the complex F(1) domain and the central stalk which is part of the complex rotary element. Rotation of the central stalk against the surrounding alpha/ATP1(3)beta/ATP2(3) subunits leads to hydrolysis of ATP in three separate catalytic sites on the beta/ATP2 subunits. The sequence is that of ATP synthase subunit delta, mitochondrial from Yarrowia lipolytica (strain CLIB 122 / E 150) (Yeast).